Here is a 124-residue protein sequence, read N- to C-terminus: uncharacterized protein (124 aa).

The protein resides in the cytoplasm. It is found in the nucleus. This is an uncharacterized protein from Schizosaccharomyces pombe (strain 972 / ATCC 24843) (Fission yeast).